A 462-amino-acid polypeptide reads, in one-letter code: L-seryl-tRNA(Sec) selenium transferase (462 aa).

An N6-(pyridoxal phosphate)lysine modification is found at Lys-294.

It belongs to the SelA family. In terms of assembly, homodecamer; pentamer of dimers. Binds only one seryl-tRNA(Sec) per dimer. It depends on pyridoxal 5'-phosphate as a cofactor.

It localises to the cytoplasm. It carries out the reaction L-seryl-tRNA(Sec) + selenophosphate + H(+) = L-selenocysteinyl-tRNA(Sec) + phosphate. The protein operates within aminoacyl-tRNA biosynthesis; selenocysteinyl-tRNA(Sec) biosynthesis; selenocysteinyl-tRNA(Sec) from L-seryl-tRNA(Sec) (bacterial route): step 1/1. Converts seryl-tRNA(Sec) to selenocysteinyl-tRNA(Sec) required for selenoprotein biosynthesis. The polypeptide is L-seryl-tRNA(Sec) selenium transferase (Yersinia pestis bv. Antiqua (strain Antiqua)).